Reading from the N-terminus, the 261-residue chain is tRNA pseudouridine synthase A (261 aa).

The active-site Nucleophile is the Asp-52. Position 111 (Tyr-111) interacts with substrate.

Belongs to the tRNA pseudouridine synthase TruA family. Homodimer.

The enzyme catalyses uridine(38/39/40) in tRNA = pseudouridine(38/39/40) in tRNA. Its function is as follows. Formation of pseudouridine at positions 38, 39 and 40 in the anticodon stem and loop of transfer RNAs. The protein is tRNA pseudouridine synthase A of Jannaschia sp. (strain CCS1).